We begin with the raw amino-acid sequence, 613 residues long: Dihydroxy-acid dehydratase (613 aa).

Aspartate 81 is a binding site for Mg(2+). Position 122 (cysteine 122) interacts with [2Fe-2S] cluster. Residues aspartate 123 and lysine 124 each coordinate Mg(2+). Residue lysine 124 is modified to N6-carboxylysine. Cysteine 195 is a [2Fe-2S] cluster binding site. Position 491 (glutamate 491) interacts with Mg(2+). Catalysis depends on serine 517, which acts as the Proton acceptor.

This sequence belongs to the IlvD/Edd family. Homodimer. Requires [2Fe-2S] cluster as cofactor. It depends on Mg(2+) as a cofactor.

It carries out the reaction (2R)-2,3-dihydroxy-3-methylbutanoate = 3-methyl-2-oxobutanoate + H2O. The catalysed reaction is (2R,3R)-2,3-dihydroxy-3-methylpentanoate = (S)-3-methyl-2-oxopentanoate + H2O. It functions in the pathway amino-acid biosynthesis; L-isoleucine biosynthesis; L-isoleucine from 2-oxobutanoate: step 3/4. The protein operates within amino-acid biosynthesis; L-valine biosynthesis; L-valine from pyruvate: step 3/4. Functions in the biosynthesis of branched-chain amino acids. Catalyzes the dehydration of (2R,3R)-2,3-dihydroxy-3-methylpentanoate (2,3-dihydroxy-3-methylvalerate) into 2-oxo-3-methylpentanoate (2-oxo-3-methylvalerate) and of (2R)-2,3-dihydroxy-3-methylbutanoate (2,3-dihydroxyisovalerate) into 2-oxo-3-methylbutanoate (2-oxoisovalerate), the penultimate precursor to L-isoleucine and L-valine, respectively. This Vibrio atlanticus (strain LGP32) (Vibrio splendidus (strain Mel32)) protein is Dihydroxy-acid dehydratase.